Consider the following 156-residue polypeptide: Small ribosomal subunit protein uS7 (156 aa).

This sequence belongs to the universal ribosomal protein uS7 family. As to quaternary structure, part of the 30S ribosomal subunit. Contacts proteins S9 and S11.

One of the primary rRNA binding proteins, it binds directly to 16S rRNA where it nucleates assembly of the head domain of the 30S subunit. Is located at the subunit interface close to the decoding center, probably blocks exit of the E-site tRNA. This chain is Small ribosomal subunit protein uS7, found in Parasynechococcus marenigrum (strain WH8102).